Consider the following 108-residue polypeptide: UPF0060 membrane protein YnfA (108 aa).

At 1-5 (MLKTT) the chain is on the periplasmic side. Residues 6–26 (LLFFVTALCEIIGCFLPWLWL) form a helical membrane-spanning segment. Residues 27 to 30 (KRGA) are Cytoplasmic-facing. A helical transmembrane segment spans residues 31–51 (SVWWLLPAAASLALFVWLLTL). At 52-60 (HPAASGRVY) the chain is on the periplasmic side. A helical transmembrane segment spans residues 61-81 (AAYGGVYVCTALLWLRVVDGV). At 82–84 (RLT) the chain is on the cytoplasmic side. Residues 85-105 (VYDWCGALIALCGMLIIVVGW) traverse the membrane as a helical segment. The Periplasmic segment spans residues 106–108 (GRT).

It belongs to the UPF0060 family.

It localises to the cell inner membrane. The chain is UPF0060 membrane protein YnfA from Salmonella agona (strain SL483).